Here is a 581-residue protein sequence, read N- to C-terminus: Arginine--tRNA ligase (581 aa).

Positions 126 to 136 (PNLAKEMHVGH) match the 'HIGH' region motif.

It belongs to the class-I aminoacyl-tRNA synthetase family. As to quaternary structure, monomer.

It localises to the cytoplasm. The enzyme catalyses tRNA(Arg) + L-arginine + ATP = L-arginyl-tRNA(Arg) + AMP + diphosphate. In Shewanella denitrificans (strain OS217 / ATCC BAA-1090 / DSM 15013), this protein is Arginine--tRNA ligase.